A 161-amino-acid chain; its full sequence is Endoribonuclease YbeY (161 aa).

Positions 127, 131, and 137 each coordinate Zn(2+).

The protein belongs to the endoribonuclease YbeY family. It depends on Zn(2+) as a cofactor.

It is found in the cytoplasm. Single strand-specific metallo-endoribonuclease involved in late-stage 70S ribosome quality control and in maturation of the 3' terminus of the 16S rRNA. This Listeria welshimeri serovar 6b (strain ATCC 35897 / DSM 20650 / CCUG 15529 / CIP 8149 / NCTC 11857 / SLCC 5334 / V8) protein is Endoribonuclease YbeY.